The following is a 279-amino-acid chain: Shikimate dehydrogenase (NADP(+)) (279 aa).

Shikimate-binding positions include 20 to 22 and T67; that span reads SRS. Catalysis depends on K71, which acts as the Proton acceptor. D83 contacts NADP(+). Shikimate is bound by residues N92 and D108. Residues 134-138 and L223 contribute to the NADP(+) site; that span reads GAGGA. Y225 is a shikimate binding site. G246 is an NADP(+) binding site.

Belongs to the shikimate dehydrogenase family. Homodimer.

It carries out the reaction shikimate + NADP(+) = 3-dehydroshikimate + NADPH + H(+). The protein operates within metabolic intermediate biosynthesis; chorismate biosynthesis; chorismate from D-erythrose 4-phosphate and phosphoenolpyruvate: step 4/7. Involved in the biosynthesis of the chorismate, which leads to the biosynthesis of aromatic amino acids. Catalyzes the reversible NADPH linked reduction of 3-dehydroshikimate (DHSA) to yield shikimate (SA). This Cereibacter sphaeroides (strain ATCC 17029 / ATH 2.4.9) (Rhodobacter sphaeroides) protein is Shikimate dehydrogenase (NADP(+)).